The sequence spans 494 residues: Glucose-6-phosphate exchanger SLC37A2 (494 aa).

The helical transmembrane segment at 20 to 37 threads the bilayer; the sequence is YRFSILFLTFVFYTSYHL. N-linked (GlcNAc...) asparagine glycans are attached at residues Asn52, Asn63, and Asn67. 11 consecutive transmembrane segments (helical) span residues 85 to 105, 116 to 136, 146 to 166, 187 to 207, 208 to 228, 295 to 315, 327 to 347, 355 to 375, 384 to 404, 427 to 447, and 455 to 475; these read FGVL…FSGI, LSTG…GFYW, LVQA…VACV, SVGN…AWGL, SFIV…LFLV, LCLL…PLYI, GDLS…AGLV, ASTC…YNKI, VGML…ITTA, AIID…AGLI, and VFYM…RLVY.

This sequence belongs to the major facilitator superfamily. Organophosphate:Pi antiporter (OPA) (TC 2.A.1.4) family.

The protein localises to the endoplasmic reticulum membrane. It carries out the reaction D-glucose 6-phosphate(in) + phosphate(out) = D-glucose 6-phosphate(out) + phosphate(in). Its function is as follows. Inorganic phosphate and glucose-6-phosphate antiporter. May transport cytoplasmic glucose-6-phosphate into the lumen of the endoplasmic reticulum and translocate inorganic phosphate into the opposite direction. The polypeptide is Glucose-6-phosphate exchanger SLC37A2 (Danio rerio (Zebrafish)).